A 542-amino-acid polypeptide reads, in one-letter code: Chaperonin GroEL (542 aa).

ATP-binding positions include 29–32 (TLGP), 86–90 (DGTTT), glycine 413, 476–478 (NAA), and aspartate 492.

Belongs to the chaperonin (HSP60) family. As to quaternary structure, forms a cylinder of 14 subunits composed of two heptameric rings stacked back-to-back. Interacts with the co-chaperonin GroES.

It is found in the cytoplasm. It carries out the reaction ATP + H2O + a folded polypeptide = ADP + phosphate + an unfolded polypeptide.. Functionally, together with its co-chaperonin GroES, plays an essential role in assisting protein folding. The GroEL-GroES system forms a nano-cage that allows encapsulation of the non-native substrate proteins and provides a physical environment optimized to promote and accelerate protein folding. This is Chaperonin GroEL from Bacillus cytotoxicus (strain DSM 22905 / CIP 110041 / 391-98 / NVH 391-98).